The primary structure comprises 363 residues: G kinase-anchoring protein 1-B (363 aa).

2 disordered regions span residues 17–79 (ALLK…RNLA) and 147–182 (VNGDGVNGVPQSKKVNKKDKRKNNQGKDKPLTVPLK). Residues 50-79 (KTNVNEKKKEKRRKKKEQQQSEANELRNLA) are a coiled coil. Positions 160 to 170 (KVNKKDKRKNN) are enriched in basic residues. 2 coiled-coil regions span residues 249 to 298 (DGKT…QEGE) and 328 to 348 (AALEQERSKVKVLQAEQVRYQ).

The protein belongs to the GKAP1 family.

The protein resides in the golgi apparatus. Its function is as follows. May play a role in the regulation of insulin-dependent IRS1 tyrosine phosphorylation in adipocytes. The polypeptide is G kinase-anchoring protein 1-B (gkap1-b) (Xenopus laevis (African clawed frog)).